The chain runs to 389 residues: Capreomycidine synthase (389 aa).

N6-(pyridoxal phosphate)lysine is present on lysine 230.

Belongs to the class-II pyridoxal-phosphate-dependent aminotransferase family. Pyridoxal 5'-phosphate serves as cofactor.

It catalyses the reaction (2S,3S)-hydroxyarginine = (2S,3R)-capreomycidine + H2O. Its pathway is antibiotic biosynthesis. Involved in the biosynthesis of capreomycidine, an unusual amino acid used by non-ribosomal peptide synthases (NRPS) to make the tuberactinomycin class of peptide antibiotic such as viomycin and capreomycin. Catalyzes the dehydration of the C3 hydroxyl of (3S)-hydroxy-(2S)-arginine and the intramolecular cyclization to yield (2S,3R)-capreomycidine. The polypeptide is Capreomycidine synthase (Streptomyces vinaceus).